The following is a 436-amino-acid chain: 3-ketoacyl-CoA thiolase (436 aa).

Catalysis depends on cysteine 99, which acts as the Acyl-thioester intermediate. Active-site proton acceptor residues include histidine 392 and cysteine 422.

Belongs to the thiolase-like superfamily. Thiolase family. Heterotetramer of two alpha chains (FadJ) and two beta chains (FadI).

The protein resides in the cytoplasm. The catalysed reaction is an acyl-CoA + acetyl-CoA = a 3-oxoacyl-CoA + CoA. It functions in the pathway lipid metabolism; fatty acid beta-oxidation. Catalyzes the final step of fatty acid oxidation in which acetyl-CoA is released and the CoA ester of a fatty acid two carbons shorter is formed. The protein is 3-ketoacyl-CoA thiolase of Escherichia coli (strain 55989 / EAEC).